Consider the following 326-residue polypeptide: Malate dehydrogenase (326 aa).

Glycine 12–alanine 18 is an NAD(+) binding site. Substrate-binding residues include arginine 93 and arginine 99. NAD(+) contacts are provided by residues asparagine 106, glutamine 113, and valine 130–asparagine 132. Residues asparagine 132 and arginine 163 each coordinate substrate. Residue histidine 188 is the Proton acceptor of the active site.

Belongs to the LDH/MDH superfamily. MDH type 2 family.

The catalysed reaction is (S)-malate + NAD(+) = oxaloacetate + NADH + H(+). Catalyzes the reversible oxidation of malate to oxaloacetate. This Chlamydia trachomatis serovar D (strain ATCC VR-885 / DSM 19411 / UW-3/Cx) protein is Malate dehydrogenase.